A 227-amino-acid polypeptide reads, in one-letter code: Ribosomal RNA large subunit methyltransferase E (227 aa).

5 residues coordinate S-adenosyl-L-methionine: Gly78, Trp80, Asp103, Asp119, and Asp143. Lys183 acts as the Proton acceptor in catalysis.

This sequence belongs to the class I-like SAM-binding methyltransferase superfamily. RNA methyltransferase RlmE family.

The protein resides in the cytoplasm. The enzyme catalyses uridine(2552) in 23S rRNA + S-adenosyl-L-methionine = 2'-O-methyluridine(2552) in 23S rRNA + S-adenosyl-L-homocysteine + H(+). Its function is as follows. Specifically methylates the uridine in position 2552 of 23S rRNA at the 2'-O position of the ribose in the fully assembled 50S ribosomal subunit. The sequence is that of Ribosomal RNA large subunit methyltransferase E from Rickettsia bellii (strain RML369-C).